We begin with the raw amino-acid sequence, 25 residues long: Aurein-5.2 (25 aa).

As to expression, expressed by the skin dorsal glands.

The protein localises to the secreted. Its function is as follows. Has antimicrobial activity against L.lactis and S.uberis. This Ranoidea raniformis (Southern bell frog) protein is Aurein-5.2.